The following is a 222-amino-acid chain: MKFFIDTANLEDIKKAYKLGVLAGVTTNPSLVAKEGIKFEDRIAEICQAVPKVESVSAEVTPDAVTAEEMIAQAEELIKINGGDEKVTIKLPMTLAGLEACRYLTEKGVKTNVTLIFTVNQALLAARAGATYVSPFLGRLDDISEDGVLLVAKIAELFDVHQLDTQIIAASVRHPDHVTRVAMAGAHIATIPYKVIEQLAMHPLTDQGIEKFAADWAKAPKL.

Lys-90 (schiff-base intermediate with substrate) is an active-site residue.

It belongs to the transaldolase family. Type 3B subfamily.

The protein resides in the cytoplasm. It carries out the reaction D-sedoheptulose 7-phosphate + D-glyceraldehyde 3-phosphate = D-erythrose 4-phosphate + beta-D-fructose 6-phosphate. It functions in the pathway carbohydrate degradation; pentose phosphate pathway; D-glyceraldehyde 3-phosphate and beta-D-fructose 6-phosphate from D-ribose 5-phosphate and D-xylulose 5-phosphate (non-oxidative stage): step 2/3. In terms of biological role, transaldolase is important for the balance of metabolites in the pentose-phosphate pathway. This Bacillus anthracis protein is Probable transaldolase 2.